A 111-amino-acid chain; its full sequence is Colipase (111 aa).

The N-terminal stretch at 1-16 (MKVLVLLLVTLAVVYA) is a signal peptide. The propeptide at 17–21 (APDPR) is enterostatin, activation peptide. Intrachain disulfides connect C33–C44, C39–C55, C43–C77, C65–C85, and C79–C103.

This sequence belongs to the colipase family. In terms of assembly, forms a 1:1 stoichiometric complex with pancreatic lipase. As to expression, expressed by the pancreas.

The protein localises to the secreted. Functionally, colipase is a cofactor of pancreatic lipase. It allows the lipase to anchor itself to the lipid-water interface. Without colipase the enzyme is washed off by bile salts, which have an inhibitory effect on the lipase. In terms of biological role, enterostatin has a biological activity as a satiety signal. This chain is Colipase (CLPS), found in Ictidomys tridecemlineatus (Thirteen-lined ground squirrel).